The sequence spans 157 residues: NADPH-dependent 7-cyano-7-deazaguanine reductase (157 aa).

Catalysis depends on Cys-55, which acts as the Thioimide intermediate. Asp-62 acts as the Proton donor in catalysis. Residues 77–79 (VES) and 96–97 (HE) contribute to the substrate site.

Belongs to the GTP cyclohydrolase I family. QueF type 1 subfamily.

Its subcellular location is the cytoplasm. The enzyme catalyses 7-aminomethyl-7-carbaguanine + 2 NADP(+) = 7-cyano-7-deazaguanine + 2 NADPH + 3 H(+). It functions in the pathway tRNA modification; tRNA-queuosine biosynthesis. Functionally, catalyzes the NADPH-dependent reduction of 7-cyano-7-deazaguanine (preQ0) to 7-aminomethyl-7-deazaguanine (preQ1). This Neisseria meningitidis serogroup B (strain ATCC BAA-335 / MC58) protein is NADPH-dependent 7-cyano-7-deazaguanine reductase.